Consider the following 345-residue polypeptide: N-acetyl-gamma-glutamyl-phosphate reductase (345 aa).

The active site involves Cys-153.

This sequence belongs to the NAGSA dehydrogenase family. Type 1 subfamily.

It is found in the cytoplasm. It carries out the reaction N-acetyl-L-glutamate 5-semialdehyde + phosphate + NADP(+) = N-acetyl-L-glutamyl 5-phosphate + NADPH + H(+). The protein operates within amino-acid biosynthesis; L-arginine biosynthesis; N(2)-acetyl-L-ornithine from L-glutamate: step 3/4. Catalyzes the NADPH-dependent reduction of N-acetyl-5-glutamyl phosphate to yield N-acetyl-L-glutamate 5-semialdehyde. The polypeptide is N-acetyl-gamma-glutamyl-phosphate reductase (Methylacidiphilum infernorum (isolate V4) (Methylokorus infernorum (strain V4))).